A 457-amino-acid chain; its full sequence is ATP synthase subunit beta (457 aa).

147-154 (GGAGVGKT) contributes to the ATP binding site.

This sequence belongs to the ATPase alpha/beta chains family. In terms of assembly, F-type ATPases have 2 components, CF(1) - the catalytic core - and CF(0) - the membrane proton channel. CF(1) has five subunits: alpha(3), beta(3), gamma(1), delta(1), epsilon(1). CF(0) has three main subunits: a(1), b(2) and c(9-12). The alpha and beta chains form an alternating ring which encloses part of the gamma chain. CF(1) is attached to CF(0) by a central stalk formed by the gamma and epsilon chains, while a peripheral stalk is formed by the delta and b chains.

The protein resides in the cell inner membrane. It catalyses the reaction ATP + H2O + 4 H(+)(in) = ADP + phosphate + 5 H(+)(out). Produces ATP from ADP in the presence of a proton gradient across the membrane. The catalytic sites are hosted primarily by the beta subunits. The protein is ATP synthase subunit beta of Haemophilus influenzae (strain PittGG).